A 222-amino-acid chain; its full sequence is uncharacterized protein (222 aa).

A helical transmembrane segment spans residues 7–26 (ICLVSLICISGIYFGYQYYQ). Positions 139–222 (CRSNAGYKVQ…AYNKQSCVLK (84 aa)) constitute an SPOR domain.

Its subcellular location is the membrane. This is an uncharacterized protein from Rickettsia prowazekii (strain Madrid E).